A 416-amino-acid chain; its full sequence is UPF0761 membrane protein Rfer_2991 (416 aa).

6 helical membrane passes run 60-80 (MALVPLVTVALAIFTAFPMFA), 117-137 (LGGAGIALLLVTAVALILTID), 156-176 (VLVYWAALTLGPLVLGVSLSI), 187-207 (VVGVMPGGVQFLLDVLQFFMV), 222-242 (WVKWSHAWAGGMFVSAGLELA), and 268-288 (ILLIWIYVAWIIVLLGAVIAA).

The protein belongs to the UPF0761 family.

It localises to the cell inner membrane. The protein is UPF0761 membrane protein Rfer_2991 of Albidiferax ferrireducens (strain ATCC BAA-621 / DSM 15236 / T118) (Rhodoferax ferrireducens).